The primary structure comprises 305 residues: Ribonuclease Z (305 aa).

The Zn(2+) site is built by histidine 63, histidine 65, aspartate 67, histidine 68, histidine 142, aspartate 209, and histidine 267. Catalysis depends on aspartate 67, which acts as the Proton acceptor.

This sequence belongs to the RNase Z family. Homodimer. Zn(2+) is required as a cofactor.

It carries out the reaction Endonucleolytic cleavage of RNA, removing extra 3' nucleotides from tRNA precursor, generating 3' termini of tRNAs. A 3'-hydroxy group is left at the tRNA terminus and a 5'-phosphoryl group is left at the trailer molecule.. Its function is as follows. Zinc phosphodiesterase, which displays some tRNA 3'-processing endonuclease activity. Probably involved in tRNA maturation, by removing a 3'-trailer from precursor tRNA. This is Ribonuclease Z from Nocardia farcinica (strain IFM 10152).